We begin with the raw amino-acid sequence, 466 residues long: Argininosuccinate lyase (466 aa).

Belongs to the lyase 1 family. Argininosuccinate lyase subfamily.

It localises to the cytoplasm. It catalyses the reaction 2-(N(omega)-L-arginino)succinate = fumarate + L-arginine. Its pathway is amino-acid biosynthesis; L-arginine biosynthesis; L-arginine from L-ornithine and carbamoyl phosphate: step 3/3. This chain is Argininosuccinate lyase, found in Brucella anthropi (strain ATCC 49188 / DSM 6882 / CCUG 24695 / JCM 21032 / LMG 3331 / NBRC 15819 / NCTC 12168 / Alc 37) (Ochrobactrum anthropi).